The sequence spans 227 residues: MLLHIPNVLNAEQLRIVRERLDTAGDAWVDGRATAGYQGAPVKRNQQIAEHTPIARELGDVILASIERNPLFISSVLPNQVYPPLFNRYEGGMQFGSHVDGAVRVLPNGVKLRTDVSVTLFISDPADYDGGELVIEDTYGVQQVKLPAGDMIVYPATSLHQVTPVTRGVRVASFFWVQSLVRSDTQRAMLFDMDTAIQRLNATNADDAARRSLVGIYHNLLRTWSEP.

Residues 80–179 enclose the Fe2OG dioxygenase domain; sequence QVYPPLFNRY…RVASFFWVQS (100 aa). Residues H98, D100, and H160 each coordinate Fe cation. Residue R170 participates in 2-oxoglutarate binding.

It depends on Fe(2+) as a cofactor. L-ascorbate is required as a cofactor.

This Paraburkholderia xenovorans (strain LB400) protein is PKHD-type hydroxylase Bxeno_B2756.